The chain runs to 427 residues: UDP-N-acetyl-D-mannosamine dehydrogenase (427 aa).

Residues Y19, I20, D39, R44, T91, and T130 each coordinate NAD(+). Residues R155, V156, K207, N211, R214, H245, R247, and G258 each coordinate UDP-N-acetyl-alpha-D-mannosaminouronate. The active-site Proton donor/acceptor is K207. The active-site Nucleophile is the C261. 2 residues coordinate UDP-N-acetyl-alpha-D-mannosaminouronate: Y318 and K319. R326 serves as a coordination point for NAD(+). A UDP-N-acetyl-alpha-D-mannosaminouronate-binding site is contributed by K404.

It belongs to the UDP-glucose/GDP-mannose dehydrogenase family. In terms of assembly, homotetramer; probably dimer of dimers.

It catalyses the reaction UDP-N-acetyl-alpha-D-mannosamine + 2 NAD(+) + H2O = UDP-N-acetyl-alpha-D-mannosaminouronate + 2 NADH + 3 H(+). Its function is as follows. Catalyzes the four-electron oxidation of UDP-N-acetyl-D-mannosamine (UDP-ManNAc), reducing NAD(+) and releasing UDP-N-acetylmannosaminuronic acid (UDP-ManNAcA). Cannot use NADP instead of NAD. The chain is UDP-N-acetyl-D-mannosamine dehydrogenase (wecC) from Methanococcus maripaludis (strain DSM 14266 / JCM 13030 / NBRC 101832 / S2 / LL).